Consider the following 329-residue polypeptide: Urease accessory protein UreD 2 (329 aa).

The interval 100 to 120 is disordered; that stretch reads YSRPSDSSKFTNGTQSANSNT. Positions 103–120 are enriched in polar residues; sequence PSDSSKFTNGTQSANSNT.

Belongs to the UreD family. As to quaternary structure, ureD, UreF and UreG form a complex that acts as a GTP-hydrolysis-dependent molecular chaperone, activating the urease apoprotein by helping to assemble the nickel containing metallocenter of UreC. The UreE protein probably delivers the nickel.

It localises to the cytoplasm. Its function is as follows. Required for maturation of urease via the functional incorporation of the urease nickel metallocenter. This Psychrobacter cryohalolentis (strain ATCC BAA-1226 / DSM 17306 / VKM B-2378 / K5) protein is Urease accessory protein UreD 2.